The sequence spans 271 residues: Formamidopyrimidine-DNA glycosylase (271 aa).

Pro-2 functions as the Schiff-base intermediate with DNA in the catalytic mechanism. The Proton donor role is filled by Glu-3. Lys-58 acts as the Proton donor; for beta-elimination activity in catalysis. His-92, Arg-111, and Arg-152 together coordinate DNA. The segment at 237–271 adopts an FPG-type zinc-finger fold; it reads TVYGREGEPCKQCGRVLKHAMIGQRATVWCGSCQR. Arg-261 serves as the catalytic Proton donor; for delta-elimination activity.

The protein belongs to the FPG family. Monomer. The cofactor is Zn(2+).

The catalysed reaction is Hydrolysis of DNA containing ring-opened 7-methylguanine residues, releasing 2,6-diamino-4-hydroxy-5-(N-methyl)formamidopyrimidine.. It catalyses the reaction 2'-deoxyribonucleotide-(2'-deoxyribose 5'-phosphate)-2'-deoxyribonucleotide-DNA = a 3'-end 2'-deoxyribonucleotide-(2,3-dehydro-2,3-deoxyribose 5'-phosphate)-DNA + a 5'-end 5'-phospho-2'-deoxyribonucleoside-DNA + H(+). Its function is as follows. Involved in base excision repair of DNA damaged by oxidation or by mutagenic agents. Acts as a DNA glycosylase that recognizes and removes damaged bases. Has a preference for oxidized purines, such as 7,8-dihydro-8-oxoguanine (8-oxoG). Has AP (apurinic/apyrimidinic) lyase activity and introduces nicks in the DNA strand. Cleaves the DNA backbone by beta-delta elimination to generate a single-strand break at the site of the removed base with both 3'- and 5'-phosphates. The protein is Formamidopyrimidine-DNA glycosylase of Xanthomonas oryzae pv. oryzae (strain MAFF 311018).